Consider the following 119-residue polypeptide: DNA-binding protein inhibitor ID-3 (119 aa).

A bHLH domain is found at 28–80 (RGKGPAAEEPLSLLDDMNHCYSRLRELVPGVPRGTQLSQVEILQRVIDYILDL).

In terms of assembly, homodimer, and heterodimer with other HLH proteins. Interacts with COPS5 and COPS7A. Interacts with IFI204. Interacts with GATA4 and NKX2-5. Interacts with ANKRD2; both proteins cooperate in myoblast differentiation. Interacts with CLOCK and BMAL1.

The protein localises to the nucleus. Transcriptional regulator (lacking a basic DNA binding domain) which negatively regulates the basic helix-loop-helix (bHLH) transcription factors by forming heterodimers and inhibiting their DNA binding and transcriptional activity. Implicated in regulating a variety of cellular processes, including cellular growth, senescence, differentiation, apoptosis, angiogenesis, and neoplastic transformation. Involved in myogenesis by inhibiting skeletal muscle and cardiac myocyte differentiation and promoting muscle precursor cells proliferation. Inhibits the binding of E2A-containing protein complexes to muscle creatine kinase E-box enhancer. Regulates the circadian clock by repressing the transcriptional activator activity of the CLOCK-BMAL1 heterodimer. The polypeptide is DNA-binding protein inhibitor ID-3 (ID3) (Canis lupus familiaris (Dog)).